Here is a 3343-residue protein sequence, read N- to C-terminus: Cadherin-3 (3343 aa).

Residues 1–26 (MTIRIFFSIFLLNHLIFFHLFNFTHQ) form the signal peptide. Asn22 carries N-linked (GlcNAc...) asparagine glycosylation. At 27-3228 (FSEETIKFSV…LFSNFSNTTT (3202 aa)) the chain is on the extracellular side. 3 consecutive Cadherin domains span residues 28 to 117 (SEET…SPIF), 118 to 229 (PIDV…PPNF), and 242 to 330 (PNTK…EPNI). Asn149, Asn250, Asn288, Asn369, Asn467, and Asn612 each carry an N-linked (GlcNAc...) asparagine glycan. Residues 632–738 (ICQITEIHVL…EDVNDNVPKF (107 aa)) enclose the Cadherin 4 domain. N-linked (GlcNAc...) asparagine glycans are attached at residues Asn752, Asn806, Asn941, Asn966, Asn970, Asn985, Asn1042, Asn1335, Asn1425, Asn1429, Asn1557, Asn1563, Asn1597, Asn1624, Asn1695, and Asn1702. A Cadherin 5 domain is found at 1279–1368 (RENELMFEIE…ADVNDNKPKI (90 aa)). 3 consecutive Cadherin domains span residues 1545-1648 (DKAA…APRF), 1676-1756 (AEDL…TPEF), and 1757-1857 (ELSS…HPMI). N-linked (GlcNAc...) asparagine glycans are attached at residues Asn1895 and Asn1900. Cadherin domains lie at 1954–2045 (TVSV…SPRF), 2046–2145 (DQQL…NAPR), and 2146–2245 (FSRI…APIF). Residues Asn2053, Asn2129, Asn2203, Asn2382, Asn2391, Asn2410, Asn2414, Asn2431, Asn2527, Asn2530, Asn2564, Asn2621, Asn2665, Asn2712, Asn2798, Asn2809, Asn2927, Asn2976, and Asn3045 are each glycosylated (N-linked (GlcNAc...) asparagine). The Laminin G-like domain occupies 3040 to 3205 (EISVRNGTSH…SSTGTSRNEC (166 aa)). A disulfide bond links Cys3172 and Cys3205. N-linked (GlcNAc...) asparagine glycosylation is found at Asn3222 and Asn3225. The chain crosses the membrane as a helical span at residues 3229-3250 (LILLITLALISLIGFSVCLLAI). Residues 3251-3343 (RRRWRQKSPG…RDGHINMAYL (93 aa)) lie on the Cytoplasmic side of the membrane. The tract at residues 3257 to 3277 (KSPGDQKQTERSNGWTGHVMP) is disordered.

As to expression, expressed in the anchor cell.

Its subcellular location is the cell membrane. It is found in the basolateral cell membrane. The protein resides in the cell junction. Cell adhesion protein involved in the control of epithelial morphogenesis. Together with metalloproteinase zmp-1 and hemicentin him-4, plays a role in anchor cell (AC) invasion during postembryonic vulval development. The polypeptide is Cadherin-3 (cdh-3) (Caenorhabditis elegans).